The following is a 192-amino-acid chain: MKLLEERIKKDGVVLPGNVLKVNQFLNHQIDPELMYKMGEEFARLFKDEEITKIITVESSGIAPAVMTGLVMKLPVVFARKHKSLTLVDNLYTSDVYSYTKKVTNTISVDKKFLTSDDKVLVIDDFLANGQAVQGIFNICDAAGAEIKGVGIVIEKSFQEGAKIIHDRGVRLESLAVISSFDDNQVHFEGEE.

Xanthine is bound by residues Leu20 and Asn27. 5-phospho-alpha-D-ribose 1-diphosphate is bound at residue 128 to 132; it reads ANGQA. Position 156 (Lys156) interacts with xanthine.

This sequence belongs to the purine/pyrimidine phosphoribosyltransferase family. Xpt subfamily. In terms of assembly, homodimer.

The protein localises to the cytoplasm. The enzyme catalyses XMP + diphosphate = xanthine + 5-phospho-alpha-D-ribose 1-diphosphate. It functions in the pathway purine metabolism; XMP biosynthesis via salvage pathway; XMP from xanthine: step 1/1. Converts the preformed base xanthine, a product of nucleic acid breakdown, to xanthosine 5'-monophosphate (XMP), so it can be reused for RNA or DNA synthesis. This chain is Xanthine phosphoribosyltransferase, found in Ligilactobacillus salivarius (strain UCC118) (Lactobacillus salivarius).